The chain runs to 137 residues: Global transcriptional regulator Spx (137 aa).

A disulfide bridge links cysteine 10 with cysteine 13.

This sequence belongs to the ArsC family. Spx subfamily. As to quaternary structure, interacts with the C-terminal domain of the alpha subunit of the RNAP.

Its subcellular location is the cytoplasm. Global transcriptional regulator that plays a key role in stress response and exerts either positive or negative regulation of genes. Acts by interacting with the C-terminal domain of the alpha subunit of the RNA polymerase (RNAP). This interaction can enhance binding of RNAP to the promoter region of target genes and stimulate their transcription, or block interaction of RNAP with activator. The chain is Global transcriptional regulator Spx from Streptococcus agalactiae serotype III (strain NEM316).